The following is a 285-amino-acid chain: MSARILDGKALAQELRAEAAAQIAELRTQIDRPPTIAVVQVGDDPAATRYVRSIDRLCQSLGAACRAIALPAETAQADLEATVATLSADDRIDGILLQLPLPAGLTLDGVLSRLAPEKDLDGIHPINAGLLAQGRPTLTPNTPAGGIELMRRYGIDIRGRRAAVVGRSAIVGRPMALLLLQADATVTICHSRTPDLGAVLRECDIIAAAAGRPGLITADMVKPGATVIDFGTNVLADGSMVGDVDFAAVAEVAGAITPVPGGTGPVTNIMLMRNLITATRTRLGI.

Residues 166–168 (GRS), Ser-191, and Thr-232 each bind NADP(+).

The protein belongs to the tetrahydrofolate dehydrogenase/cyclohydrolase family. As to quaternary structure, homodimer.

It catalyses the reaction (6R)-5,10-methylene-5,6,7,8-tetrahydrofolate + NADP(+) = (6R)-5,10-methenyltetrahydrofolate + NADPH. It carries out the reaction (6R)-5,10-methenyltetrahydrofolate + H2O = (6R)-10-formyltetrahydrofolate + H(+). It participates in one-carbon metabolism; tetrahydrofolate interconversion. Its function is as follows. Catalyzes the oxidation of 5,10-methylenetetrahydrofolate to 5,10-methenyltetrahydrofolate and then the hydrolysis of 5,10-methenyltetrahydrofolate to 10-formyltetrahydrofolate. This Chloroflexus aurantiacus (strain ATCC 29366 / DSM 635 / J-10-fl) protein is Bifunctional protein FolD.